A 335-amino-acid polypeptide reads, in one-letter code: MDLNAILIILGVIALIILVAHGIWSNRREKSQYFENSKNFTREARIREPQENQQYQTADQSQSDFQRNLLETDNDCFSSESAHNSHQPLYHYSEQSAVQSVDQIKIRLPDSEPNYVMQEQFSPKHTDYASMSIEELEKSIDLDEGINSSSQHLRQELAQISGQSIADDKVNIEEHIFTESSISFVEPQTNTEFQQVVEKTKSGNSSFIMLYVVASENQGFSGLQLTKTLDELGFIFGKKQIYHRHVDLSITSPVLFSVANIEQPGTFDLTNIADFYTVGIALFMQLPSYGNVTANLRMMIRAAKTIAQDLDGVVVTEQQEIFDEQAERDYLARVS.

The Periplasmic segment spans residues 1–4; sequence MDLN. A helical transmembrane segment spans residues 5–25; it reads AILIILGVIALIILVAHGIWS. At 26 to 335 the chain is on the cytoplasmic side; the sequence is NRREKSQYFE…AERDYLARVS (310 aa).

The protein belongs to the ZipA family. In terms of assembly, interacts with FtsZ via their C-terminal domains.

The protein resides in the cell inner membrane. Essential cell division protein that stabilizes the FtsZ protofilaments by cross-linking them and that serves as a cytoplasmic membrane anchor for the Z ring. Also required for the recruitment to the septal ring of downstream cell division proteins. The sequence is that of Cell division protein ZipA from Histophilus somni (strain 2336) (Haemophilus somnus).